The sequence spans 311 residues: Fucose-specific lectin (311 aa).

Tandem repeats lie at residues 1–53, 54–103, 104–151, 152–209, 210–256, and 257–311. A 6 X approximate tandem repeats region spans residues 1 to 311; it reads MSTPGAQEVL…LGRRALPPAE (311 aa). Beta-L-fucose contacts are provided by Arg25, Glu37, Trp44, Arg73, Glu85, Trp94, Arg126, Glu138, Trp146, Arg177, Gln189, Trp198, Arg230, Gln242, Arg277, and Glu291.

Belongs to the fungal fucose-specific lectin family. In terms of assembly, homodimer.

In terms of biological role, lectin that specifically binds to L-fucose and weakly reacts with mannose and N-acetyl-neuraminic acid. Has strongest preference for the alpha-1,6-fucosylated chain (core fucose) on glycoproteins among alpha-1,2-, alpha-1,3-, alpha-1,4-, and alpha-1,6-fucosylated chains. Binds to fucose residues of IgE in mice and human, causing antigen-independent IgE-mediated mast cell activation and anaphylactoid reactions in mice and is possibly implicated in allergic response to Aspergillus oryzae in humans. Induces secretion of pro-inflammatory cytokines IL6 and IL8 implicated in ocular diseases such as mycotic keratitis, probably through its interaction with host toll-like receptors TLR2 and TLR4, followed by up-regulation of pro-inflammatory cytokines. In Aspergillus oryzae (strain ATCC 42149 / RIB 40) (Yellow koji mold), this protein is Fucose-specific lectin.